A 72-amino-acid polypeptide reads, in one-letter code: Cytotoxin 9 (72 aa).

An N-terminal signal peptide occupies residues 1–12 (VVTIVCLDLGYT). Disulfide bonds link Cys-15-Cys-33, Cys-26-Cys-50, Cys-54-Cys-65, and Cys-66-Cys-71.

Belongs to the three-finger toxin family. Short-chain subfamily. Type IA cytotoxin sub-subfamily. Monomer in solution; Homodimer and oligomer in the presence of negatively charged lipids forming a pore with a size ranging between 20 and 30 Angstroms. Expressed by the venom gland.

It is found in the secreted. Functionally, shows cytolytic activity on many different cells by forming a pore in lipid membranes. In vivo, increases heart rate or kills the animal by cardiac arrest. In addition, it binds to heparin with high affinity, interacts with Kv channel-interacting protein 1 (KCNIP1) in a calcium-independent manner, and binds to integrin alpha-V/beta-3 (ITGAV/ITGB3) with moderate affinity. Preferentially binds acidic phospholipids like phosphatidylserine, phosphatidic acid and phosphatidyl glycerol. Has hemolytic activity towards human erythrocytes (EC(50)=0.171 uM) and cytolytic activity towards various cell lines. The polypeptide is Cytotoxin 9 (Naja naja (Indian cobra)).